The following is a 477-amino-acid chain: Ribulose bisphosphate carboxylase large chain (477 aa).

Residues 1–2 constitute a propeptide that is removed on maturation; that stretch reads MS. At proline 3 the chain carries N-acetylproline. Asparagine 123 and threonine 173 together coordinate substrate. The active-site Proton acceptor is the lysine 175. Lysine 177 contacts substrate. Lysine 201, aspartate 203, and glutamate 204 together coordinate Mg(2+). Residue lysine 201 is modified to N6-carboxylysine. The active-site Proton acceptor is histidine 294. Arginine 295, histidine 327, and serine 379 together coordinate substrate.

Belongs to the RuBisCO large chain family. Type I subfamily. In terms of assembly, heterohexadecamer of 8 large chains and 8 small chains; disulfide-linked. The disulfide link is formed within the large subunit homodimers. It depends on Mg(2+) as a cofactor. Post-translationally, the disulfide bond which can form in the large chain dimeric partners within the hexadecamer appears to be associated with oxidative stress and protein turnover.

The protein localises to the plastid. It localises to the chloroplast. It carries out the reaction 2 (2R)-3-phosphoglycerate + 2 H(+) = D-ribulose 1,5-bisphosphate + CO2 + H2O. It catalyses the reaction D-ribulose 1,5-bisphosphate + O2 = 2-phosphoglycolate + (2R)-3-phosphoglycerate + 2 H(+). RuBisCO catalyzes two reactions: the carboxylation of D-ribulose 1,5-bisphosphate, the primary event in carbon dioxide fixation, as well as the oxidative fragmentation of the pentose substrate in the photorespiration process. Both reactions occur simultaneously and in competition at the same active site. This is Ribulose bisphosphate carboxylase large chain from Lolium perenne (Perennial ryegrass).